An 823-amino-acid chain; its full sequence is Ciliated left-right organizer ZP-N domains-containing protein (823 aa).

The signal sequence occupies residues 1–22; the sequence is MWGSPALAWAVWLACVQPTVFP. Disordered stretches follow at residues 206 to 242, 269 to 422, 434 to 520, and 632 to 656; these read MGLY…LLPL, LVHI…DLLH, GPFL…SPSP, and LPRE…EGPG. Over residues 216-230 the composition is skewed to pro residues; the sequence is TVTVQSPRQGLLQRW. Residues 389-402 are compositionally biased toward low complexity; sequence GPETPPAGVPPAAS.

Its subcellular location is the secreted. Its function is as follows. Plays a role in left-right patterning process. This is Ciliated left-right organizer ZP-N domains-containing protein from Homo sapiens (Human).